The sequence spans 147 residues: Hemoglobin subunit gamma (147 aa).

Residues 3–147 (HFTAEEKAII…VAIALGHKYH (145 aa)) form the Globin domain. Heme b contacts are provided by His64 and His93.

Belongs to the globin family. As to quaternary structure, heterotetramer of two alpha chains and two gamma chains in fetal hemoglobin (Hb F). In terms of tissue distribution, red blood cells.

In terms of biological role, gamma chains make up the fetal hemoglobin F, in combination with alpha chains. This is Hemoglobin subunit gamma (HBG) from Cephalopachus bancanus (Western tarsier).